Here is a 513-residue protein sequence, read N- to C-terminus: Abl interactor 2 (513 aa).

Serine 40 is modified (phosphoserine). Residues 45–107 (RALEETKAYT…DIHKEKVARR (63 aa)) enclose the t-SNARE coiled-coil homology domain. The interval 167 to 431 (KMGGLPRTTP…PPEDYEEEEA (265 aa)) is disordered. Residues 174-185 (TTPPTQKPPSPP) show a composition bias toward pro residues. Residues serine 183 and serine 227 each carry the phosphoserine modification. Positions 217-241 (PTRNMAPSQQSPVRTASVNQRNRTY) are enriched in polar residues. A compositionally biased stretch (low complexity) spans 242–272 (SSSGSSGGSHPSSRSSSRENSGSGSVGVPIA). Positions 273–282 (VPTPSPPSVF) are enriched in pro residues. Residues 283–325 (PAPAGSAGTPPLPATSASAPAPLVPATVPSSTAPNAAAGGAPN) are compositionally biased toward low complexity. Threonine 361 carries the post-translational modification Phosphothreonine. Serine 368 is subject to Phosphoserine. Over residues 376 to 399 (SITSQTSLQNQMNGGPFYSQNPVS) the composition is skewed to polar residues. A compositionally biased stretch (pro residues) spans 400 to 409 (DTPPPPPPVE). Residues 451–510 (SYLEKVVAIYDYTKDKEDELSFQEGAIIYVIKKNDDGWYEGVMNGVTGLFPGNYVESIMH) enclose the SH3 domain.

The protein belongs to the ABI family. In terms of assembly, component of the WAVE complex composed of ABI2, CYFIP1 or CYFIP2, BRK1, NCKAP1 and WASF1/WAVE1. Within the complex, a heterodimer containing NCKAP1 and CYFIP1 interacts with a heterotrimer formed by WAVE1, ABI2 and BRK1. CYFIP2 binds to activated RAC1 which causes the complex to dissociate, releasing activated WASF1. Interacts (via SH3 domain) with ABL1 and ABL2. (Microbial infection) Interacts with human cytomegalovirus UL135. Phosphorylated by ABL1. In terms of tissue distribution, widely expressed. Abundant in testes, ovary, thymus, and colon, with lower but detectable levels in prostate, peripheral blood leukocytes, and spleen.

The protein resides in the cytoplasm. It localises to the nucleus. The protein localises to the cell projection. Its subcellular location is the lamellipodium. It is found in the filopodium. The protein resides in the cytoskeleton. It localises to the cell junction. The protein localises to the adherens junction. In terms of biological role, regulator of actin cytoskeleton dynamics underlying cell motility and adhesion. Functions as a component of the WAVE complex, which activates actin nucleating machinery Arp2/3 to drive lamellipodia formation. Acts as a regulator and substrate of nonreceptor tyrosine kinases ABL1 and ABL2 involved in processes linked to cell growth and differentiation. Positively regulates ABL1-mediated phosphorylation of ENAH, which is required for proper polymerization of nucleated actin filaments at the leading edge. Contributes to the regulation of actin assembly at the tips of neuron projections. In particular, controls dendritic spine morphogenesis and may promote dendritic spine specification toward large mushroom-type spines known as repositories of memory in the brain. In hippocampal neurons, may mediate actin-dependent BDNF-NTRK2 early endocytic trafficking that triggers dendrite outgrowth. Participates in ocular lens morphogenesis, likely by regulating lamellipodia-driven adherens junction formation at the epithelial cell-secondary lens fiber interface. Also required for nascent adherens junction assembly in epithelial cells. This chain is Abl interactor 2, found in Homo sapiens (Human).